The sequence spans 583 residues: Aspartate--tRNA(Asp/Asn) ligase (583 aa).

L-aspartate is bound at residue Glu-173. An aspartate region spans residues 197–200 (QMFK). Arg-219 provides a ligand contact to L-aspartate. ATP contacts are provided by residues 219–221 (RDE) and Gln-228. His-447 lines the L-aspartate pocket. Residue Glu-481 coordinates ATP. Position 488 (Arg-488) interacts with L-aspartate. 533–536 (GLDR) is a binding site for ATP.

Belongs to the class-II aminoacyl-tRNA synthetase family. Type 1 subfamily. As to quaternary structure, homodimer.

The protein localises to the cytoplasm. The enzyme catalyses tRNA(Asx) + L-aspartate + ATP = L-aspartyl-tRNA(Asx) + AMP + diphosphate. Aspartyl-tRNA synthetase with relaxed tRNA specificity since it is able to aspartylate not only its cognate tRNA(Asp) but also tRNA(Asn). Reaction proceeds in two steps: L-aspartate is first activated by ATP to form Asp-AMP and then transferred to the acceptor end of tRNA(Asp/Asn). This is Aspartate--tRNA(Asp/Asn) ligase from Elusimicrobium minutum (strain Pei191).